Here is an 81-residue protein sequence, read N- to C-terminus: ATP synthase subunit c (81 aa).

Helical transmembrane passes span 6 to 26 and 57 to 77; these read ASASVIAAALAVGLAAIGPGI and LAFMESLTIYGLVISLVLLFA.

This sequence belongs to the ATPase C chain family. In terms of assembly, F-type ATPases have 2 components, F(1) - the catalytic core - and F(0) - the membrane proton channel. F(1) has five subunits: alpha(3), beta(3), gamma(1), delta(1), epsilon(1). F(0) has four main subunits: a(1), b(1), b'(1) and c(10-14). The alpha and beta chains form an alternating ring which encloses part of the gamma chain. F(1) is attached to F(0) by a central stalk formed by the gamma and epsilon chains, while a peripheral stalk is formed by the delta, b and b' chains.

The protein localises to the cellular thylakoid membrane. Functionally, f(1)F(0) ATP synthase produces ATP from ADP in the presence of a proton or sodium gradient. F-type ATPases consist of two structural domains, F(1) containing the extramembraneous catalytic core and F(0) containing the membrane proton channel, linked together by a central stalk and a peripheral stalk. During catalysis, ATP synthesis in the catalytic domain of F(1) is coupled via a rotary mechanism of the central stalk subunits to proton translocation. In terms of biological role, key component of the F(0) channel; it plays a direct role in translocation across the membrane. A homomeric c-ring of between 10-14 subunits forms the central stalk rotor element with the F(1) delta and epsilon subunits. The polypeptide is ATP synthase subunit c (Gloeothece citriformis (strain PCC 7424) (Cyanothece sp. (strain PCC 7424))).